The sequence spans 329 residues: Phenylalanine--tRNA ligase alpha subunit (329 aa).

Residue Glu253 coordinates Mg(2+).

It belongs to the class-II aminoacyl-tRNA synthetase family. Phe-tRNA synthetase alpha subunit type 1 subfamily. As to quaternary structure, tetramer of two alpha and two beta subunits. Requires Mg(2+) as cofactor.

It localises to the cytoplasm. It carries out the reaction tRNA(Phe) + L-phenylalanine + ATP = L-phenylalanyl-tRNA(Phe) + AMP + diphosphate + H(+). The polypeptide is Phenylalanine--tRNA ligase alpha subunit (Coxiella burnetii (strain CbuK_Q154) (Coxiella burnetii (strain Q154))).